Reading from the N-terminus, the 201-residue chain is Proteasome subunit beta 1 (201 aa).

A propeptide spans 1–10 (MNGSPSAMKG) (removed in mature form; by autocatalysis). Thr-11 (nucleophile) is an active-site residue.

It belongs to the peptidase T1B family. The 20S proteasome core is composed of 14 alpha and 14 beta subunits that assemble into four stacked heptameric rings, resulting in a barrel-shaped structure. The two inner rings, each composed of seven catalytic beta subunits, are sandwiched by two outer rings, each composed of seven alpha subunits. The catalytic chamber with the active sites is on the inside of the barrel. Has a gated structure, the ends of the cylinder being occluded by the N-termini of the alpha-subunits. Is capped at one or both ends by the proteasome regulatory ATPase, PAN.

It localises to the cytoplasm. The enzyme catalyses Cleavage of peptide bonds with very broad specificity.. Its activity is regulated as follows. The formation of the proteasomal ATPase PAN-20S proteasome complex, via the docking of the C-termini of PAN into the intersubunit pockets in the alpha-rings, triggers opening of the gate for substrate entry. Interconversion between the open-gate and close-gate conformations leads to a dynamic regulation of the 20S proteasome proteolysis activity. Functionally, component of the proteasome core, a large protease complex with broad specificity involved in protein degradation. This chain is Proteasome subunit beta 1, found in Thermococcus gammatolerans (strain DSM 15229 / JCM 11827 / EJ3).